The following is a 624-amino-acid chain: DNA mismatch repair protein MutL (624 aa).

Residues 360–396 (GGNHFSQPAPRRETASTEPAVARERAPQPAYHSGSGY) form a disordered region. Residues 369–385 (PRRETASTEPAVARERA) show a composition bias toward basic and acidic residues.

The protein belongs to the DNA mismatch repair MutL/HexB family.

This protein is involved in the repair of mismatches in DNA. It is required for dam-dependent methyl-directed DNA mismatch repair. May act as a 'molecular matchmaker', a protein that promotes the formation of a stable complex between two or more DNA-binding proteins in an ATP-dependent manner without itself being part of a final effector complex. This is DNA mismatch repair protein MutL from Serratia proteamaculans (strain 568).